We begin with the raw amino-acid sequence, 507 residues long: Maturase K (507 aa).

It belongs to the intron maturase 2 family. MatK subfamily.

The protein localises to the plastid. Its subcellular location is the chloroplast. Functionally, usually encoded in the trnK tRNA gene intron. Probably assists in splicing its own and other chloroplast group II introns. This Kalmia procumbens (Alpine azalea) protein is Maturase K.